A 306-amino-acid polypeptide reads, in one-letter code: Secretory carrier-associated membrane protein 1 (306 aa).

The segment at 1–66 (MAGRYDSNPF…LPPEPAAFGA (66 aa)) is disordered. At 1–141 (MAGRYDSNPF…EIPSHLQRMQ (141 aa)) the chain is on the cytoplasmic side. Residues 25–36 (KAGGQPSYGGGA) are compositionally biased toward gly residues. A compositionally biased stretch (low complexity) spans 40 to 55 (PNPRNVPSVSSNSRLS). Positions 72-109 (LDSSKDLKNREKELQAREAELNKREKELKRREEAAARA) form a coiled coil. 4 consecutive transmembrane segments (helical) span residues 142–162 (YVAF…VIAV), 174–194 (IWLL…VLWY), 209–229 (FGLF…SAVA), and 257–277 (IFYF…IWVI). The Cytoplasmic segment spans residues 278–306 (QQVYMYFRGSGKAAEMKRDATRGAMRAAF).

It belongs to the SCAMP family.

The protein localises to the cell membrane. It localises to the cytoplasmic vesicle. The protein resides in the secretory vesicle membrane. Probably involved in membrane trafficking. The sequence is that of Secretory carrier-associated membrane protein 1 (SCAMP1) from Oryza sativa subsp. japonica (Rice).